The following is a 268-amino-acid chain: Acyl-CoA-binding domain-containing protein 4 (268 aa).

The ACB domain maps to 12–101; sequence CQKQFQAAVS…MKLVAQKVID (90 aa). An acyl-CoA contacts are provided by residues 23-32, 43-47, lysine 69, and tyrosine 88; these read IQNLPKNGSY and YSYYK. The segment at 151–175 is disordered; the sequence is AVSEPPCLPKEPAPPSPESHSPRDL. A compositionally biased stretch (pro residues) spans 156–167; the sequence is PCLPKEPAPPSP. Phosphoserine is present on residues serine 166 and serine 171.

Binds medium- and long-chain acyl-CoA esters and may function as an intracellular carrier of acyl-CoA esters. The protein is Acyl-CoA-binding domain-containing protein 4 (ACBD4) of Homo sapiens (Human).